A 165-amino-acid polypeptide reads, in one-letter code: Crossover junction endodeoxyribonuclease RuvC (165 aa).

Active-site residues include aspartate 7, glutamate 67, and aspartate 140. Mg(2+) contacts are provided by aspartate 7, glutamate 67, and aspartate 140.

This sequence belongs to the RuvC family. In terms of assembly, homodimer which binds Holliday junction (HJ) DNA. The HJ becomes 2-fold symmetrical on binding to RuvC with unstacked arms; it has a different conformation from HJ DNA in complex with RuvA. In the full resolvosome a probable DNA-RuvA(4)-RuvB(12)-RuvC(2) complex forms which resolves the HJ. Mg(2+) serves as cofactor.

Its subcellular location is the cytoplasm. The enzyme catalyses Endonucleolytic cleavage at a junction such as a reciprocal single-stranded crossover between two homologous DNA duplexes (Holliday junction).. The RuvA-RuvB-RuvC complex processes Holliday junction (HJ) DNA during genetic recombination and DNA repair. Endonuclease that resolves HJ intermediates. Cleaves cruciform DNA by making single-stranded nicks across the HJ at symmetrical positions within the homologous arms, yielding a 5'-phosphate and a 3'-hydroxyl group; requires a central core of homology in the junction. The consensus cleavage sequence is 5'-(A/T)TT(C/G)-3'. Cleavage occurs on the 3'-side of the TT dinucleotide at the point of strand exchange. HJ branch migration catalyzed by RuvA-RuvB allows RuvC to scan DNA until it finds its consensus sequence, where it cleaves and resolves the cruciform DNA. The polypeptide is Crossover junction endodeoxyribonuclease RuvC (Dehalococcoides mccartyi (strain ATCC BAA-2266 / KCTC 15142 / 195) (Dehalococcoides ethenogenes (strain 195))).